A 259-amino-acid chain; its full sequence is DNA adenine methylase (259 aa).

Residues tyrosine 7, lysine 11, 32-37 (FCGGLS), aspartate 50, 156-157 (HF), aspartate 171, and tyrosine 181 contribute to the S-adenosyl-L-methionine site.

This sequence belongs to the N(4)/N(6)-methyltransferase family. Monomer.

The enzyme catalyses a 2'-deoxyadenosine in DNA + S-adenosyl-L-methionine = an N(6)-methyl-2'-deoxyadenosine in DNA + S-adenosyl-L-homocysteine + H(+). In terms of biological role, an alpha subtype methylase, recognizes the double-stranded sequence 5'-GATC-3' and methylates A-2. Also acts on 5-hydroxymethylcytosine (hmC)-containing DNA, the normal base in this virus. May prevent degradation of viral DNA by the host restriction-modification antiviral defense system. The protein is DNA adenine methylase of Enterobacteria phage T4 (Bacteriophage T4).